Reading from the N-terminus, the 448-residue chain is Tubulin beta-2 chain (448 aa).

GTP contacts are provided by Gln-11, Glu-69, Ser-138, Gly-142, Thr-143, Gly-144, Asn-204, and Asn-226. A Mg(2+)-binding site is contributed by Glu-69. Positions Glu-421 to Met-448 are disordered. The segment covering Thr-429–Met-448 has biased composition (acidic residues).

This sequence belongs to the tubulin family. As to quaternary structure, dimer of alpha and beta chains. A typical microtubule is a hollow water-filled tube with an outer diameter of 25 nm and an inner diameter of 15 nM. Alpha-beta heterodimers associate head-to-tail to form protofilaments running lengthwise along the microtubule wall with the beta-tubulin subunit facing the microtubule plus end conferring a structural polarity. Microtubules usually have 13 protofilaments but different protofilament numbers can be found in some organisms and specialized cells. It depends on Mg(2+) as a cofactor.

The protein resides in the cytoplasm. It is found in the cytoskeleton. Functionally, tubulin is the major constituent of microtubules, a cylinder consisting of laterally associated linear protofilaments composed of alpha- and beta-tubulin heterodimers. Microtubules grow by the addition of GTP-tubulin dimers to the microtubule end, where a stabilizing cap forms. Below the cap, tubulin dimers are in GDP-bound state, owing to GTPase activity of alpha-tubulin. In Eleusine indica (Goosegrass), this protein is Tubulin beta-2 chain (TUBB2).